The chain runs to 271 residues: Ribosomal RNA small subunit methyltransferase A (271 aa).

S-adenosyl-L-methionine contacts are provided by Asn-18, Leu-20, Gly-45, Glu-66, Asp-91, and Asn-112.

It belongs to the class I-like SAM-binding methyltransferase superfamily. rRNA adenine N(6)-methyltransferase family. RsmA subfamily.

It is found in the cytoplasm. The enzyme catalyses adenosine(1518)/adenosine(1519) in 16S rRNA + 4 S-adenosyl-L-methionine = N(6)-dimethyladenosine(1518)/N(6)-dimethyladenosine(1519) in 16S rRNA + 4 S-adenosyl-L-homocysteine + 4 H(+). Its function is as follows. Specifically dimethylates two adjacent adenosines (A1518 and A1519) in the loop of a conserved hairpin near the 3'-end of 16S rRNA in the 30S particle. May play a critical role in biogenesis of 30S subunits. The protein is Ribosomal RNA small subunit methyltransferase A of Vibrio atlanticus (strain LGP32) (Vibrio splendidus (strain Mel32)).